Consider the following 948-residue polypeptide: Phosphoenolpyruvate carboxylase (948 aa).

Residues His138 and Lys610 contribute to the active site.

The protein belongs to the PEPCase type 1 family. The cofactor is Mg(2+).

The catalysed reaction is oxaloacetate + phosphate = phosphoenolpyruvate + hydrogencarbonate. Functionally, forms oxaloacetate, a four-carbon dicarboxylic acid source for the tricarboxylic acid cycle. This Streptococcus sanguinis (strain SK36) protein is Phosphoenolpyruvate carboxylase.